The sequence spans 380 residues: Zinc finger protein neuro-d4 (380 aa).

A disordered region spans residues 132–164 (ALLDCQKPPPGDFAHDAEGDEMEDDAPRRKNKA). The segment at 190–213 (YVCDICGKRYKNRPGLSYHYTHTH) adopts a C2H2-type zinc-finger fold. 2 consecutive PHD-type zinc fingers follow at residues 262-321 (EGPC…CKNC) and 318-368 (CKNC…CLRQ). The Zn(2+) site is built by cysteine 265, cysteine 268, cysteine 286, cysteine 289, histidine 294, cysteine 297, cysteine 315, cysteine 318, cysteine 321, cysteine 324, cysteine 336, cysteine 339, histidine 344, cysteine 347, cysteine 362, and cysteine 365.

Belongs to the requiem/DPF family. Component of neuron-specific chromatin remodeling complex (nBAF complex), a subfamily of ATP-dependent SWI/SNF chromatin remodeling complexes.

The protein localises to the cytoplasm. Its subcellular location is the nucleus. May have an important role in developing neurons by participating in regulation of cell survival, possibly as a neurospecific transcription factor. Belongs to the neuron-specific chromatin remodeling complex (nBAF complex) and plays a role in neural development. This is Zinc finger protein neuro-d4 from Gallus gallus (Chicken).